The sequence spans 393 residues: Phospho-N-acetylmuramoyl-pentapeptide-transferase (393 aa).

The next 10 helical transmembrane spans lie at Arg-29–Ile-49, Thr-75–Phe-95, Phe-101–Trp-121, Tyr-138–Glu-158, Ser-193–Gly-213, Gly-226–Thr-246, Ala-263–Phe-283, Val-290–Ile-310, Val-315–Val-335, and Gln-370–Leu-390.

This sequence belongs to the glycosyltransferase 4 family. MraY subfamily. Mg(2+) serves as cofactor.

The protein resides in the cell inner membrane. The catalysed reaction is UDP-N-acetyl-alpha-D-muramoyl-L-alanyl-gamma-D-glutamyl-meso-2,6-diaminopimeloyl-D-alanyl-D-alanine + di-trans,octa-cis-undecaprenyl phosphate = di-trans,octa-cis-undecaprenyl diphospho-N-acetyl-alpha-D-muramoyl-L-alanyl-D-glutamyl-meso-2,6-diaminopimeloyl-D-alanyl-D-alanine + UMP. It functions in the pathway cell wall biogenesis; peptidoglycan biosynthesis. Catalyzes the initial step of the lipid cycle reactions in the biosynthesis of the cell wall peptidoglycan: transfers peptidoglycan precursor phospho-MurNAc-pentapeptide from UDP-MurNAc-pentapeptide onto the lipid carrier undecaprenyl phosphate, yielding undecaprenyl-pyrophosphoryl-MurNAc-pentapeptide, known as lipid I. This Methylibium petroleiphilum (strain ATCC BAA-1232 / LMG 22953 / PM1) protein is Phospho-N-acetylmuramoyl-pentapeptide-transferase.